Here is a 375-residue protein sequence, read N- to C-terminus: Neuropeptide Y receptor type 4-2 (375 aa).

Residues methionine 1 to aspartate 39 are Extracellular-facing. N-linked (GlcNAc...) asparagine glycosylation is found at asparagine 2, asparagine 19, and asparagine 29. Residues valine 40 to leucine 60 traverse the membrane as a helical segment. The Cytoplasmic segment spans residues cysteine 61–aspartate 87. The chain crosses the membrane as a helical span at residues phenylalanine 88–isoleucine 108. Over phenylalanine 109–methionine 116 the chain is Extracellular. Cysteine 114 and cysteine 201 are oxidised to a cystine. A helical transmembrane segment spans residues serine 117–leucine 137. Residues glutamate 138–glutamine 155 are Cytoplasmic-facing. A helical membrane pass occupies residues alanine 156 to alanine 176. At asparagine 177–threonine 212 the chain is on the extracellular side. Asparagine 187 is a glycosylation site (N-linked (GlcNAc...) asparagine). Residues isoleucine 213–cysteine 233 traverse the membrane as a helical segment. Topologically, residues tyrosine 234–valine 263 are cytoplasmic. A helical membrane pass occupies residues asparagine 264–phenylalanine 284. Topologically, residues asparagine 285–asparagine 301 are extracellular. Residues leucine 302–tyrosine 322 form a helical membrane-spanning segment. The Cytoplasmic segment spans residues glycine 323 to isoleucine 375. Cysteine 340 carries the S-palmitoyl cysteine lipid modification.

Belongs to the G-protein coupled receptor 1 family.

It localises to the cell membrane. In terms of biological role, g protein-coupled receptor for PPY/pancreatic polypeptide/PP, NPY/neuropeptide Y and PYY/peptide YY that is negatively coupled to cAMP. The rank order of affinity for these polypeptides and their derivatives is PP, PP (2-36) and [Ile-31, Gln-34] PP &gt; [Pro-34] PYY &gt; PYY and [Leu-31, Pro-34] NPY &gt; NPY &gt; PYY (3-36) and NPY (2-36) &gt; PP (13-36) &gt; PP (31-36) &gt; NPY free acid. The chain is Neuropeptide Y receptor type 4-2 from Homo sapiens (Human).